Here is a 178-residue protein sequence, read N- to C-terminus: Gamma-crystallin S (178 aa).

S2 carries the N-acetylserine modification. The tract at residues 2–5 (SKSG) is N-terminal arm. Beta/gamma crystallin 'Greek key' domains lie at 6–44 (TKIT…RVEG) and 45–87 (GTWA…RAVH). The connecting peptide stretch occupies residues 88–93 (LSSGGQ). Beta/gamma crystallin 'Greek key' domains are found at residues 94–134 (YKIQ…KVLD) and 135–177 (GVWI…RRIV).

It belongs to the beta/gamma-crystallin family. Monomer.

Crystallins are the dominant structural components of the vertebrate eye lens. The chain is Gamma-crystallin S (CRYGS) from Canis lupus familiaris (Dog).